The primary structure comprises 511 residues: 2-isopropylmalate synthase (511 aa).

The 263-residue stretch at 5–267 (IQIFDTTLRD…ESQINLEETK (263 aa)) folds into the Pyruvate carboxyltransferase domain. Residues D14, H202, H204, and N238 each contribute to the Mn(2+) site. A regulatory domain region spans residues 391-511 (QLDNLQLQYV…EYELKEGIRT (121 aa)).

The protein belongs to the alpha-IPM synthase/homocitrate synthase family. LeuA type 1 subfamily. Homodimer. It depends on Mn(2+) as a cofactor.

It localises to the cytoplasm. It carries out the reaction 3-methyl-2-oxobutanoate + acetyl-CoA + H2O = (2S)-2-isopropylmalate + CoA + H(+). The protein operates within amino-acid biosynthesis; L-leucine biosynthesis; L-leucine from 3-methyl-2-oxobutanoate: step 1/4. In terms of biological role, catalyzes the condensation of the acetyl group of acetyl-CoA with 3-methyl-2-oxobutanoate (2-ketoisovalerate) to form 3-carboxy-3-hydroxy-4-methylpentanoate (2-isopropylmalate). In Staphylococcus epidermidis (strain ATCC 35984 / DSM 28319 / BCRC 17069 / CCUG 31568 / BM 3577 / RP62A), this protein is 2-isopropylmalate synthase.